Consider the following 484-residue polypeptide: Glutamate--tRNA ligase (484 aa).

The short motif at 11–21 (PSPTGYPHLGN) is the 'HIGH' region element. Zn(2+) is bound by residues C108, C110, C135, and D137. The 'KMSKS' region signature appears at 245–249 (KLSKR). ATP is bound at residue K248.

This sequence belongs to the class-I aminoacyl-tRNA synthetase family. Glutamate--tRNA ligase type 1 subfamily. As to quaternary structure, monomer. The cofactor is Zn(2+).

It localises to the cytoplasm. The catalysed reaction is tRNA(Glu) + L-glutamate + ATP = L-glutamyl-tRNA(Glu) + AMP + diphosphate. Catalyzes the attachment of glutamate to tRNA(Glu) in a two-step reaction: glutamate is first activated by ATP to form Glu-AMP and then transferred to the acceptor end of tRNA(Glu). In Dehalococcoides mccartyi (strain ATCC BAA-2266 / KCTC 15142 / 195) (Dehalococcoides ethenogenes (strain 195)), this protein is Glutamate--tRNA ligase.